We begin with the raw amino-acid sequence, 549 residues long: MDVVEVAGSWWAQEREDIIMKYEKGHRAGLPEDKGPKPFRSYNNNVDHLGIVHETELPPLTAREAKQIRREISRKSKWVDMLGDWEKYKSSRKLIDRAYKGMPMNIRGPMWSVLLNTEEMKLKNPGRYQIMKEKGKRSSEHIQRIDRDVSGTLRKHIFFRDRYGTKQRELLHILLAYEEYNPEVGYCRDLSHIAALFLLYLPEEDAFWALVQLLASERHSLQGFHSPNGGTVQGLQDQQEHVVATSQPKTMGHQDKKDLCGQCSPLGCLIRILIDGISLGLTLRLWDVYLVEGEQALMPITRIAFKVQQKRLTKTSRCGPWARFCNRFVDTWARDEDTVLKHLRASMKKLTRKQGDLQPPAKPEQGSSASRPVPASRGGKTLCKGDRQAPPGPPARFPRPIWSASPPRAPRSSTPCPGGAVREDTYPVGTQGVPSPALAQGGPQGSWRFLQWNSMPRLPTDLDVEGPWFRHYDFRQSCWVRAISQEDQLAPCWQAEHPAERVRSAFAAPSTDSDQGTPFRARDEQPCAPTSGPCLCGLHLESSQFPPGF.

The region spanning 101–293 is the Rab-GAP TBC domain; the sequence is GMPMNIRGPM…RLWDVYLVEG (193 aa). 2 S-palmitoyl cysteine lipidation sites follow: C318 and C325. The segment at 350 to 423 is disordered; it reads LTRKQGDLQP…TPCPGGAVRE (74 aa). The span at 398–417 shows a compositional bias: low complexity; the sequence is PRPIWSASPPRAPRSSTPCP.

Post-translationally, ubiquitinated by a CUL7-based E3 ligase, which leads to proteasomal degradation. In terms of processing, palmitoylation is required for membrane localization and protects TBC1D3 from ubiquitination.

Its subcellular location is the cell membrane. Its function is as follows. Acts as a GTPase activating protein for RAB5. Does not act on RAB4 or RAB11. This Homo sapiens (Human) protein is TBC1 domain family member 3L.